A 308-amino-acid polypeptide reads, in one-letter code: MTPRKKLEGLVAATVTPMTPDGRINLSVIHQYVDYLVSEQNVKNIFVNGTTGEGLSLSIQERKQLAEEWMCQGKGKLDHVIIHVGALSLLESQELARHAAAIGASGIAVIAPSFFKPTNKDELLGFLQKVASEAPTVPFYYYHIPAMTGVKIRVEELLDGIREQIPTFQGVKFSDTDLLDLAQCINKKEREQFVFLYGVDEQLLSALAIGANGAVGSTYNYLGRKTNLMLQAFAKPDLALARKYQFLTGEFLSFVIKLGFGVAQTKAVMTSISGIPMGPPRLPLVGASEEFIAKAKAKLESIVWPDGD.

The aceneuramate site is built by threonine 50 and threonine 51. Tyrosine 142 acts as the Proton donor in catalysis. The Schiff-base intermediate with substrate role is filled by lysine 172. Serine 174, glycine 198, aspartate 200, glutamate 201, and serine 217 together coordinate aceneuramate.

This sequence belongs to the DapA family. NanA subfamily. As to quaternary structure, homotetramer.

The protein localises to the cytoplasm. It carries out the reaction aceneuramate = aldehydo-N-acetyl-D-mannosamine + pyruvate. It participates in amino-sugar metabolism; N-acetylneuraminate degradation. In terms of biological role, catalyzes the cleavage of N-acetylneuraminic acid (sialic acid) to form pyruvate and N-acetylmannosamine via a Schiff base intermediate. It prevents sialic acids from being recycled and returning to the cell surface. Involved in the N-glycolylneuraminic acid (Neu5Gc) degradation pathway. The sequence is that of N-acetylneuraminate lyase from Gallus gallus (Chicken).